A 526-amino-acid polypeptide reads, in one-letter code: GMP synthase [glutamine-hydrolyzing] (526 aa).

A Glutamine amidotransferase type-1 domain is found at R9–L208. Residue C86 is the Nucleophile of the active site. Active-site residues include H182 and E184. The GMPS ATP-PPase domain maps to W209–R401. ATP is bound at residue S236–S242.

As to quaternary structure, homodimer.

It catalyses the reaction XMP + L-glutamine + ATP + H2O = GMP + L-glutamate + AMP + diphosphate + 2 H(+). Its pathway is purine metabolism; GMP biosynthesis; GMP from XMP (L-Gln route): step 1/1. Functionally, catalyzes the synthesis of GMP from XMP. The protein is GMP synthase [glutamine-hydrolyzing] of Aeromonas salmonicida (strain A449).